Reading from the N-terminus, the 249-residue chain is Pyridoxine 5'-phosphate synthase (249 aa).

Asn-7 provides a ligand contact to 3-amino-2-oxopropyl phosphate. 9–10 provides a ligand contact to 1-deoxy-D-xylulose 5-phosphate; that stretch reads DH. Arg-18 lines the 3-amino-2-oxopropyl phosphate pocket. His-43 (proton acceptor) is an active-site residue. 2 residues coordinate 1-deoxy-D-xylulose 5-phosphate: Arg-45 and His-50. The active-site Proton acceptor is the Glu-70. Thr-100 serves as a coordination point for 1-deoxy-D-xylulose 5-phosphate. The Proton donor role is filled by His-190. 3-amino-2-oxopropyl phosphate-binding positions include Gly-191 and 212–213; that span reads GH.

This sequence belongs to the PNP synthase family. Homooctamer; tetramer of dimers.

The protein resides in the cytoplasm. It carries out the reaction 3-amino-2-oxopropyl phosphate + 1-deoxy-D-xylulose 5-phosphate = pyridoxine 5'-phosphate + phosphate + 2 H2O + H(+). Its pathway is cofactor biosynthesis; pyridoxine 5'-phosphate biosynthesis; pyridoxine 5'-phosphate from D-erythrose 4-phosphate: step 5/5. Catalyzes the complicated ring closure reaction between the two acyclic compounds 1-deoxy-D-xylulose-5-phosphate (DXP) and 3-amino-2-oxopropyl phosphate (1-amino-acetone-3-phosphate or AAP) to form pyridoxine 5'-phosphate (PNP) and inorganic phosphate. The sequence is that of Pyridoxine 5'-phosphate synthase from Synechococcus sp. (strain CC9902).